We begin with the raw amino-acid sequence, 363 residues long: 2,5-diketocamphane 1,2-monooxygenase 2 (363 aa).

FMN is bound by residues Met-74 and 186–194; that span reads TGLTKNSSS.

It belongs to the bacterial luciferase oxidoreductase family. Homodimer. Likely forms a loose transient complex with a P.putida flavin reductase that provides the required FMNH(2) to the enzyme.

It carries out the reaction (1R,4R)-bornane-2,5-dione + FMNH2 + O2 = (1R,4R)-5-oxo-1,2-campholide + FMN + H2O + H(+). It functions in the pathway terpene metabolism; (R)-camphor degradation. In terms of biological role, involved in the degradation and assimilation of (+)-camphor, which allows P.putida strain NCIMB 10007 to grow on this enantiomer of camphor as the sole carbon source. Catalyzes the FMNH(2)-dependent lactonization of 2,5-diketocamphane via a Baeyer-Villiger oxidation to produce the unstable lactone 5-oxo-1,2-campholide with (R,R) configuration, that presumably undergoes spontaneous hydrolysis to form 2-oxo-Delta(3)-4,5,5-trimethylcyclopentenylacetate. Is also able to convert (+)-camphor and norcamphor to the corresponding lactone in vitro. Shows no conversion of (-)-camphor, (+)-fenchone, (-)-fenchone, and (+)-nopinone. Acts on other bicyclic ketones and, to a lesser extent, on some 2- and 4-substituted monocyclic ketones. The chain is 2,5-diketocamphane 1,2-monooxygenase 2 from Pseudomonas putida (Arthrobacter siderocapsulatus).